The chain runs to 245 residues: Probable histone chaperone asf-1-like protein (245 aa).

Over residues 157 to 166 (EDPVAEPVDE) the composition is skewed to acidic residues. Residues 157 to 245 (EDPVAEPVDE…SGDVEMGDKH (89 aa)) form a disordered region. The segment covering 167-183 (EANKVFDEDDLMPLHDD) has biased composition (basic and acidic residues). Residues 184 to 206 (GQDDDEEEEDDDETGPNTEEVDL) are compositionally biased toward acidic residues. The span at 215–245 (ANAHDGTEQKNGEESMEHDGASGDVEMGDKH) shows a compositional bias: basic and acidic residues.

This sequence belongs to the ASF1 family. As to quaternary structure, interacts with histone H3 and histone H4.

It is found in the nucleus. Histone chaperone that facilitates histone deposition and histone exchange and removal during nucleosome assembly and disassembly. The chain is Probable histone chaperone asf-1-like protein (asfl-1) from Caenorhabditis elegans.